The sequence spans 405 residues: L-rhamnonate dehydratase (405 aa).

Residues H33 and R59 each contribute to the substrate site. Mg(2+)-binding residues include D226, E252, and E280. The active-site Proton acceptor is H329. E349 contacts substrate.

It belongs to the mandelate racemase/muconate lactonizing enzyme family. RhamD subfamily. In terms of assembly, homooctamer; tetramer of dimers. Mg(2+) is required as a cofactor.

It catalyses the reaction L-rhamnonate = 2-dehydro-3-deoxy-L-rhamnonate + H2O. Its function is as follows. Catalyzes the dehydration of L-rhamnonate to 2-keto-3-deoxy-L-rhamnonate (KDR). This chain is L-rhamnonate dehydratase, found in Shigella boydii serotype 4 (strain Sb227).